The chain runs to 1202 residues: MAGHLVKYGKHRTRRSYARIKEVLDLPNLIEIQSDSYQWFLDEGLREMFNDIMPIEDFAGKLSLEFVDYQLLEPKYTVDEAREHEANYSAPLHVTLRLTNHETGEIKSQDVFFGDFPLMTEQGTFIINGAERVIVSQLVRSPGVYYNLDTDKNNRKIWGTTVIPNRGAWLEYETDAKEISYVRIDRTRKIPMTELVRALGFGSDEEIIDIFGGSDSLDFTLDKDVHKNPEDSRVAESLKDIYERLRPGEPKTADSSRSLLTARFFDPKRYDMAPVGRYKVNKKLSLKTRLLGQTLAETLADPDTGEVIAQKGEMVNKDVMKKLAVFLDRPDFKMVTYQPSEEAVVTEPMTIQVIKVQDPNDPERTLNMIGNGNIDAKLKHITPADIIASMNYFFLLQDGIGSTDDIDHLGNRRIRSVGELLQNQFRIGLSRMERVVRERMSIQDAETVTPQQLINIRPVVAATKEFFGSSQLSQFMDQTNPLGELSHKRRLSALGPGGLTRDRAGYEVRDVHYTHYGRMCPIETPEGPNIGLINNLASYGKINRYGFIETPYRRVSWEDHKVTDRIDYLTADEEDQFVIAQANSPLNDDGSFADDVVMARHESDNIETSIENVDYMDVSPKQVVAVATACIPFLENDDSNRALMGANMQRQAVPLVDPHSPLIGTGIEYKAAHDSGVALLCQHAGVVEYVDAREVRVRRDDGALDTYKLMKFRRSNGGKNYNQRPIVRVNDKVDADEVLADGPSMEQGELALGQNPLIAFMTWQGYNFEDAIAINERLVRDDVYTSIHIEEYESEARDTKLGPEEMTREIPNIGEDALRNLDQDGIVRVGAEVEDGDILVGKVTPKGVTELSAEERLLHAIFGEKAREVRDTSLRVPHGGGGIVQDVKIFTRENGDELSPGVNMMVRVYIAQKRKLQVGDKMAGRHGNKGTVSVVIPQEDMPYMPDGTPIDIMLSPMGVPSRMNIGQVLELHLGMAARNLGIHMTTPVFDGAQDKDIWEAVAEAGMDSDAKSVLYDGRTGEPFEQRVAVGVMHYMKLAHMVDDKIHARSIGPYSLVTQQPLGGKAQFGGQRFGEMEVWALEAYGAAYTLQEILTYKSDDVVGRVKTYEAIVKGEPIPRPGVPESFRVLVKELQALGLDMKVLGGDDQEVELRDMDEEDDDVVNVDALSKYAEKQNEKTNASAEEAKAPSTESAPVETKNNQN.

Positions 1151 to 1162 (LRDMDEEDDDVV) are enriched in acidic residues. The interval 1151-1202 (LRDMDEEDDDVVNVDALSKYAEKQNEKTNASAEEAKAPSTESAPVETKNNQN) is disordered. A compositionally biased stretch (polar residues) spans 1189–1202 (STESAPVETKNNQN).

This sequence belongs to the RNA polymerase beta chain family. In terms of assembly, the RNAP catalytic core consists of 2 alpha, 1 beta, 1 beta' and 1 omega subunit. When a sigma factor is associated with the core the holoenzyme is formed, which can initiate transcription.

It catalyses the reaction RNA(n) + a ribonucleoside 5'-triphosphate = RNA(n+1) + diphosphate. DNA-dependent RNA polymerase catalyzes the transcription of DNA into RNA using the four ribonucleoside triphosphates as substrates. This Pediococcus pentosaceus (strain ATCC 25745 / CCUG 21536 / LMG 10740 / 183-1w) protein is DNA-directed RNA polymerase subunit beta.